The primary structure comprises 252 residues: Small ribosomal subunit protein uS3 (252 aa).

Positions 39-110 (IRKALMKELK…EVKINVVEIK (72 aa)) constitute a KH type-2 domain. The segment at 218–252 (TSDEKPKFEKRDFNRSNNNRRDQAPKSHPVAKEAK) is disordered. A compositionally biased stretch (basic and acidic residues) spans 219–252 (SDEKPKFEKRDFNRSNNNRRDQAPKSHPVAKEAK).

It belongs to the universal ribosomal protein uS3 family. As to quaternary structure, part of the 30S ribosomal subunit. Forms a tight complex with proteins S10 and S14.

Binds the lower part of the 30S subunit head. Binds mRNA in the 70S ribosome, positioning it for translation. The sequence is that of Small ribosomal subunit protein uS3 from Spiroplasma citri.